The chain runs to 231 residues: 5'-methylthioadenosine/S-adenosylhomocysteine nucleosidase (231 aa).

Residue glutamate 12 is the Proton acceptor of the active site. Residues glycine 78, valine 153, and 174 to 175 (ME) contribute to the substrate site. Residue aspartate 198 is the Proton donor of the active site.

The protein belongs to the PNP/UDP phosphorylase family. MtnN subfamily.

The catalysed reaction is S-adenosyl-L-homocysteine + H2O = S-(5-deoxy-D-ribos-5-yl)-L-homocysteine + adenine. It catalyses the reaction S-methyl-5'-thioadenosine + H2O = 5-(methylsulfanyl)-D-ribose + adenine. It carries out the reaction 5'-deoxyadenosine + H2O = 5-deoxy-D-ribose + adenine. It participates in amino-acid biosynthesis; L-methionine biosynthesis via salvage pathway; S-methyl-5-thio-alpha-D-ribose 1-phosphate from S-methyl-5'-thioadenosine (hydrolase route): step 1/2. Its function is as follows. Catalyzes the irreversible cleavage of the glycosidic bond in both 5'-methylthioadenosine (MTA) and S-adenosylhomocysteine (SAH/AdoHcy) to adenine and the corresponding thioribose, 5'-methylthioribose and S-ribosylhomocysteine, respectively. Also cleaves 5'-deoxyadenosine, a toxic by-product of radical S-adenosylmethionine (SAM) enzymes, into 5-deoxyribose and adenine. The chain is 5'-methylthioadenosine/S-adenosylhomocysteine nucleosidase from Aliivibrio salmonicida (strain LFI1238) (Vibrio salmonicida (strain LFI1238)).